The sequence spans 506 residues: Anaerobic nitric oxide reductase transcription regulator NorR (506 aa).

Asp57 carries the 4-aspartylphosphate modification. The Sigma-54 factor interaction domain maps to 187-416; that stretch reads MIGLSPAMTQ…LEHAIHRAVV (230 aa). Residues 215–222 and 278–287 contribute to the ATP site; these read GETGTGKE and ADNGTLFLDE. The segment at residues 481-500 is a DNA-binding region (H-T-H motif); sequence WAASARALETDVANLHRLAK.

It participates in nitrogen metabolism; nitric oxide reduction. Required for the expression of anaerobic nitric oxide (NO) reductase, acts as a transcriptional activator for at least the norVW operon. Activation also requires sigma-54. This chain is Anaerobic nitric oxide reductase transcription regulator NorR, found in Salmonella schwarzengrund (strain CVM19633).